Reading from the N-terminus, the 94-residue chain is Small ribosomal subunit protein uS19 (94 aa).

It belongs to the universal ribosomal protein uS19 family.

In terms of biological role, protein S19 forms a complex with S13 that binds strongly to the 16S ribosomal RNA. The polypeptide is Small ribosomal subunit protein uS19 (Hamiltonella defensa subsp. Acyrthosiphon pisum (strain 5AT)).